Reading from the N-terminus, the 203-residue chain is MMQDVSSSPVSPADDSLSNSEEEPDRQQPPSGKRGGRKRRSSRRSAGGGAGPGGAASGGAGGGDEPGSPAQGKRGKKSAGCGGGGGGGAGGGGSSSGGGSPQSCEELQTQRVMANVRERQRTQSLNEPFAALRKIIPTLPSDKLSKIQTLKLAARYIDFLYRVLQSDELDSKTASCSYVAHEWLSYAFSVWRMEGAWSMSASH.

The span at 1–18 (MMQDVSSSPVSPADDSLS) shows a compositional bias: low complexity. A disordered region spans residues 1–107 (MMQDVSSSPV…GGSPQSCEEL (107 aa)). Over residues 34-43 (RGGRKRRSSR) the composition is skewed to basic residues. 2 stretches are compositionally biased toward gly residues: residues 46-65 (AGGGAGPGGAASGGAGGGDE) and 80-100 (GCGGGGGGGAGGGGSSSGGGS). A bHLH domain is found at 109-160 (TQRVMANVRERQRTQSLNEPFAALRKIIPTLPSDKLSKIQTLKLAARYIDFL). The tract at residues 162–192 (RVLQSDELDSKTASCSYVAHEWLSYAFSVWR) is sufficient for transactivation activity.

Efficient DNA binding requires dimerization with another bHLH protein. Homodimer or heterodimer with E proteins such as TCF3. ID1 binds preferentially to TCF3 but does not interact efficiently with TWIST1 so ID1 levels control the amount of TCF3 available to dimerize with TWIST and thus determine the type of dimer formed.

It localises to the nucleus. Functionally, acts as a transcriptional regulator. Inhibits myogenesis by sequestrating E proteins, inhibiting trans-activation by MEF2, and inhibiting DNA-binding by MYOD1 through physical interaction. This interaction probably involves the basic domains of both proteins. Also represses expression of pro-inflammatory cytokines such as TNFA and IL1B. Regulates cranial suture patterning and fusion. Activates transcription as a heterodimer with E proteins. Regulates gene expression differentially, depending on dimer composition. Homodimers induce expression of FGFR2 and POSTN while heterodimers repress FGFR2 and POSTN expression and induce THBS1 expression. Heterodimerization is also required for osteoblast differentiation. Represses the activity of the circadian transcriptional activator: NPAS2-BMAL1 heterodimer. In Gorilla gorilla gorilla (Western lowland gorilla), this protein is Twist-related protein 1 (TWIST1).